The sequence spans 237 residues: Ribonuclease PH (237 aa).

Residues arginine 86 and 124–126 contribute to the phosphate site; that span reads GTR.

The protein belongs to the RNase PH family. As to quaternary structure, homohexameric ring arranged as a trimer of dimers.

It carries out the reaction tRNA(n+1) + phosphate = tRNA(n) + a ribonucleoside 5'-diphosphate. In terms of biological role, phosphorolytic 3'-5' exoribonuclease that plays an important role in tRNA 3'-end maturation. Removes nucleotide residues following the 3'-CCA terminus of tRNAs; can also add nucleotides to the ends of RNA molecules by using nucleoside diphosphates as substrates, but this may not be physiologically important. Probably plays a role in initiation of 16S rRNA degradation (leading to ribosome degradation) during starvation. This is Ribonuclease PH from Shewanella sediminis (strain HAW-EB3).